Here is a 909-residue protein sequence, read N- to C-terminus: MEPQREFFHIAGRSAKEYLSENLVQFIQATQNYFNIGEKFRDPYVAPSAGVTTDRSQKLQLRVVPMQIEDNANYYKARFTLNVGDNRLVDLGSSYFDIKGTLDRGPSFKPYGGTAYNPLAPKSAPVNSPFIVGNDTHVVAQLPQTYAAANTGVTEAIQQQVSNVQPNPQDGLPNYSGPEVVDATTKAGLGRVVAEESEGQQFPCLRAYAAPQTAAGDVSTAPIEKTYVNTTNVAGRVSGTMATDVIDWQNPDAHFVDYVDDGRSTSAGNRPNYIGFRDNFIGIMYYNSGSNTGSLSSQTQQLNVVLDLNDRNSELSYQYMLADLTSRWHYFALWNQAVDSYDRHVRIIENDGYEEGPPNLSFPIQGIQNPFSPSSVGTEMTVNTANQTAAATANTVAHIGYGNIPAVEMNLPANLRRTFLYANVAMYLPDTYKFTPPNIDLPANHLSYGYMNGRLPLPNIIDTWTDIGARWSLDVMDTVNPFNHHRNTGLKYRSQLLGNGRHCNFHIQVPQKFFAIKNLLLLPGTYNYEWYFRKDPNMVLQSTLGNDLREDGAQITYNQVNLYVSFFPMNYDTQSELELMLRNATNDQNFSDYLGAVNNLYQIPAGSNTVVVNIPDRSWGAFRGWSFTRLKVTETPRIGATQDPNFEYSGTIPYLDGTFYLSHTFQRCSIQWDSSVPWPGNDRLLVPNWFEIKDPPNQDPEGYNTMQSNLTKDFFFTQMAASYNQGYQGFSYPSCTKHYGFINNFEPMSRQVPVYDATHPNLMAAYLNNPATMPIWNNCGFQQKTSTNALLERCGHAYVANWPFPLTGRDALPNQTTEKKFLVDNYLWQIPFSSNFLNMGTLTDLGQNVMYANSSHSLNMQFTVDPMNEPTYLLLLFGVFDQVVVNQPTRSGISVAYLRLPFASGSAAT.

The residue at position 897 (Y897) is a Phosphotyrosine; by host.

This sequence belongs to the adenoviridae hexon protein family. Homotrimer. Interacts with the capsid vertex protein; this interaction binds the peripentonal hexons to the neighboring penton base. Interacts with the hexon-linking protein; this interaction tethers the hexons surrounding the penton to those situated in the central plate of the facet. Interacts with the hexon-interlacing protein; this interaction lashes the hexons together. Interacts with host dyneins DYNC1LI1 and DYNC1I2; this interaction might be involved in intracellular microtubule-dependent transport of incoming viral capsid. Interacts with the shutoff protein; this interaction allows folding and formation of hexons trimers. Interacts with pre-protein VI; this interaction probably allows nuclear import of hexon trimers and possibly pre-capsid assembly.

The protein resides in the virion. Its subcellular location is the host nucleus. Functionally, major capsid protein that self-associates to form 240 hexon trimers, each in the shape of a hexagon, building most of the pseudo T=25 capsid. Assembled into trimeric units with the help of the chaperone shutoff protein. Transported by pre-protein VI to the nucleus where it associates with other structural proteins to form an empty capsid. Might be involved, through its interaction with host dyneins, in the intracellular microtubule-dependent transport of incoming viral capsid to the nucleus. In Pantherophis guttatus (Corn snake), this protein is Hexon protein.